The sequence spans 406 residues: LIM/homeobox protein Lhx1 (406 aa).

2 consecutive LIM zinc-binding domains span residues 4–54 (CAGC…CKND) and 63–117 (CAGC…CKED). 2 disordered regions span residues 128-187 (NSLH…RTTI) and 293-374 (YDFF…EVFG). The span at 137–148 (SDPSLSPDSQDP) shows a compositional bias: low complexity. A compositionally biased stretch (basic and acidic residues) spans 151–167 (DDAKDSESANVSDKEAG). Phosphoserine is present on S162. A DNA-binding region (homeobox) is located at residues 180 to 239 (RRGPRTTIKAKQLETLKAAFAATPKPTRHIREQLAQETGLNMRVIQVWFQNRRSKERRMK). The span at 315–327 (PSSGPSGTPLGGL) shows a compositional bias: low complexity. Over residues 352–362 (GDSPSPEPSLP) the composition is skewed to pro residues.

In terms of assembly, interacts with LDB1 via the tandem LIM domains. As to expression, expressed in the brain, thymus, and tonsils. Expressed in samples from patients with chronic myeloid leukemia (CML) and in 58% of acute myeloid leukemia (AML) cell lines.

The protein localises to the nucleus. Its function is as follows. Potential transcription factor. May play a role in early mesoderm formation and later in lateral mesoderm differentiation and neurogenesis. The protein is LIM/homeobox protein Lhx1 (LHX1) of Homo sapiens (Human).